A 465-amino-acid polypeptide reads, in one-letter code: Sodium-dependent phosphate transport protein 1 (465 aa).

Residues asparagine 47 and asparagine 56 are each glycosylated (N-linked (GlcNAc...) asparagine). A run of 10 helical transmembrane segments spans residues 79 to 99, 109 to 129, 171 to 191, 198 to 218, 255 to 275, 304 to 324, 337 to 357, 363 to 383, 399 to 419, and 428 to 448; these read GIIF…VGYI, IGFA…AAAV, MSLS…GIIC, MVFY…FVLY, AMIK…YLWT, LPYL…DFLM, LFTA…LYLS, TITF…GALI, VTTL…GLFL, and FKIF…YLIF.

The protein belongs to the major facilitator superfamily. Sodium/anion cotransporter family. In terms of assembly, interacts with PDZK1. In terms of tissue distribution, kidney cortex and liver.

The protein resides in the apical cell membrane. It carries out the reaction 3 Na(+)(out) + phosphate(out) = 3 Na(+)(in) + phosphate(in). It catalyses the reaction urate(out) = urate(in). Important for the resorption of phosphate by the kidney. May be involved in actively transporting phosphate into cells via Na(+) cotransport in the renal brush border membrane. Plays a role in urate transport in the kidney. The protein is Sodium-dependent phosphate transport protein 1 (SLC17A1) of Oryctolagus cuniculus (Rabbit).